The chain runs to 259 residues: Imidazole glycerol phosphate synthase subunit HisF (259 aa).

Catalysis depends on residues Asp-11 and Asp-130.

This sequence belongs to the HisA/HisF family. As to quaternary structure, heterodimer of HisH and HisF.

It is found in the cytoplasm. The catalysed reaction is 5-[(5-phospho-1-deoxy-D-ribulos-1-ylimino)methylamino]-1-(5-phospho-beta-D-ribosyl)imidazole-4-carboxamide + L-glutamine = D-erythro-1-(imidazol-4-yl)glycerol 3-phosphate + 5-amino-1-(5-phospho-beta-D-ribosyl)imidazole-4-carboxamide + L-glutamate + H(+). The protein operates within amino-acid biosynthesis; L-histidine biosynthesis; L-histidine from 5-phospho-alpha-D-ribose 1-diphosphate: step 5/9. Its function is as follows. IGPS catalyzes the conversion of PRFAR and glutamine to IGP, AICAR and glutamate. The HisF subunit catalyzes the cyclization activity that produces IGP and AICAR from PRFAR using the ammonia provided by the HisH subunit. This Acidovorax ebreus (strain TPSY) (Diaphorobacter sp. (strain TPSY)) protein is Imidazole glycerol phosphate synthase subunit HisF.